Consider the following 410-residue polypeptide: Tryptophan synthase beta chain (410 aa).

K99 bears the N6-(pyridoxal phosphate)lysine mark.

The protein belongs to the TrpB family. As to quaternary structure, tetramer of two alpha and two beta chains. The cofactor is pyridoxal 5'-phosphate.

It carries out the reaction (1S,2R)-1-C-(indol-3-yl)glycerol 3-phosphate + L-serine = D-glyceraldehyde 3-phosphate + L-tryptophan + H2O. Its pathway is amino-acid biosynthesis; L-tryptophan biosynthesis; L-tryptophan from chorismate: step 5/5. In terms of biological role, the beta subunit is responsible for the synthesis of L-tryptophan from indole and L-serine. The chain is Tryptophan synthase beta chain from Pseudomonas fluorescens (strain Pf0-1).